An 860-amino-acid chain; its full sequence is Alanine--tRNA ligase (860 aa).

Zn(2+) is bound by residues H553, H557, C655, and H659.

Belongs to the class-II aminoacyl-tRNA synthetase family. It depends on Zn(2+) as a cofactor.

The protein localises to the cytoplasm. It catalyses the reaction tRNA(Ala) + L-alanine + ATP = L-alanyl-tRNA(Ala) + AMP + diphosphate. Its function is as follows. Catalyzes the attachment of alanine to tRNA(Ala) in a two-step reaction: alanine is first activated by ATP to form Ala-AMP and then transferred to the acceptor end of tRNA(Ala). Also edits incorrectly charged Ser-tRNA(Ala) and Gly-tRNA(Ala) via its editing domain. The protein is Alanine--tRNA ligase of Legionella pneumophila (strain Lens).